Consider the following 258-residue polypeptide: Global transcriptional regulator CodY (258 aa).

Residues 1–156 (MSSLLSKTRR…SATIVGMEML (156 aa)) are GAF domain. Positions 204–223 (ASKIADKVGITRSVIVNALR) form a DNA-binding region, H-T-H motif.

It belongs to the CodY family.

Its subcellular location is the cytoplasm. Functionally, DNA-binding global transcriptional regulator which is involved in the adaptive response to starvation and acts by directly or indirectly controlling the expression of numerous genes in response to nutrient availability. During rapid exponential growth, CodY is highly active and represses genes whose products allow adaptation to nutrient depletion. The protein is Global transcriptional regulator CodY of Clostridium botulinum (strain Eklund 17B / Type B).